The following is a 397-amino-acid chain: DNA-directed RNA polymerase subunit Rpo1C (397 aa).

Belongs to the RNA polymerase beta' chain family. Part of the RNA polymerase complex.

It is found in the cytoplasm. The enzyme catalyses RNA(n) + a ribonucleoside 5'-triphosphate = RNA(n+1) + diphosphate. Its function is as follows. DNA-dependent RNA polymerase (RNAP) catalyzes the transcription of DNA into RNA using the four ribonucleoside triphosphates as substrates. Forms part of the jaw domain. In Pyrococcus abyssi (strain GE5 / Orsay), this protein is DNA-directed RNA polymerase subunit Rpo1C.